The chain runs to 107 residues: Replication restart protein PriB (107 aa).

Residues 8–107 (IENRLSLIGV…LHAEHIELLD (100 aa)) enclose the SSB domain.

The protein belongs to the PriB family. As to quaternary structure, homodimer. Interacts with PriA and DnaT. Component of the replication restart primosome. Primosome assembly occurs via a 'hand-off' mechanism. PriA binds to replication forks, subsequently PriB then DnaT bind; DnaT then displaces ssDNA to generate the helicase loading substrate.

In terms of biological role, involved in the restart of stalled replication forks, which reloads the replicative helicase on sites other than the origin of replication; the PriA-PriB pathway is the major replication restart pathway. During primosome assembly it facilitates complex formation between PriA and DnaT on DNA; stabilizes PriA on DNA. Stimulates the DNA unwinding activity of PriA helicase. The protein is Replication restart protein PriB of Actinobacillus succinogenes (strain ATCC 55618 / DSM 22257 / CCUG 43843 / 130Z).